The following is a 579-amino-acid chain: Methionine--tRNA ligase (579 aa).

The short motif at 14–24 (PYINGVKHLGN) is the 'HIGH' region element. 4 residues coordinate Zn(2+): C146, C149, C159, and C162. Positions 346 to 350 (KFSTS) match the 'KMSKS' region motif. T349 serves as a coordination point for ATP.

The protein belongs to the class-I aminoacyl-tRNA synthetase family. MetG type 1 subfamily. In terms of assembly, monomer. It depends on Zn(2+) as a cofactor.

It is found in the cytoplasm. It catalyses the reaction tRNA(Met) + L-methionine + ATP = L-methionyl-tRNA(Met) + AMP + diphosphate. Its function is as follows. Is required not only for elongation of protein synthesis but also for the initiation of all mRNA translation through initiator tRNA(fMet) aminoacylation. The chain is Methionine--tRNA ligase from Hyphomonas neptunium (strain ATCC 15444).